The following is a 635-amino-acid chain: MTAEATVETRGFETEAKQLLHLMIHSLYSNKEIFLRELVSNASDAADKLRFEALKQPELLEQDSELKITIDFDKEAKTLSITDNGIGMNRDEVIANLGTIARSGTAQFMANLSGDQKKDSQLIGQFGVGFYSAFIVADKVEVLTRRAGSEPSEGVRWVSEGEAEYSIENIEKAARGTTIILHLKKDQEEFADGWRLRSIIKKYSDHISLPVEMPKEAAPGEDKEEKAEVEYEVINTAKALWARSRSDVTDEEYKEFYKHVSHDYTDPLSWSHNRVEGKLDYTSLIYIPSKAPFDMYNREKPRGVKLYVQRTFIMDDAEQFLPLYLRFIKGVVDSNDLSLNVSREILQQDPNIDSMRSALTKRVLDMLEKMAKKEPEKYATFWKEFGEVLKEGPAEDFANKEKIAKLLRFATTHKNTNEQDQSLDAYIERMKEGQDKIYYVVAENFNTAKNSPHLEVFRKKGIEVLLLSNRIDDWLMGHLMEYDGKQFQDVGKGSLDLGKLDSEEDKKEQEKVEEAMAPFVERMKAALAEQVEEVRITHRLTESPACLVVGEHDMGAQMRRLLEAAGQAVPESKPIIEINPTHPLVQKLDQEQDEDRFKDLSHILFDQASLAEGGSLKDPAAYVSRLNKLLLELSN.

The tract at residues 1 to 343 (MTAEATVETR…SNDLSLNVSR (343 aa)) is a; substrate-binding. The segment at 344 to 560 (EILQQDPNID…EHDMGAQMRR (217 aa)) is b. Positions 561-635 (LLEAAGQAVP…LNKLLLELSN (75 aa)) are c.

It belongs to the heat shock protein 90 family. In terms of assembly, homodimer.

It localises to the cytoplasm. Its function is as follows. Molecular chaperone. Has ATPase activity. This chain is Chaperone protein HtpG, found in Saccharophagus degradans (strain 2-40 / ATCC 43961 / DSM 17024).